A 272-amino-acid polypeptide reads, in one-letter code: Cell shape-determining protein MreC (272 aa).

At 1–8 (MNRFKKSK) the chain is on the cytoplasmic side. Residues 9–29 (YVIIVFVTVLLVSALLATTYS) traverse the membrane as a helical segment. Topologically, residues 30–272 (STIVTKLGDG…VDVIELVGNS (243 aa)) are extracellular. Residues 64–112 (LTRTYNENESLKKQLYQLEVKSNEVESLKTENEQLRQLLDMKSKLQATK) are a coiled coil.

This sequence belongs to the MreC family. As to quaternary structure, homodimer. Interacts with a number of proteins in the elongasome, including PBP1a (pbpA), PBP1b, PBP2a, PBP2b (penA), StkP, MltG, MreD and RodZ.

The protein resides in the cell membrane. Involved in formation and maintenance of cell shape, probably part of the elongasome which synthesizes peripheral peptidoglycan (PG). This is Cell shape-determining protein MreC from Streptococcus pneumoniae (strain ATCC BAA-255 / R6).